A 262-amino-acid polypeptide reads, in one-letter code: Ribosome-recycling factor, mitochondrial (262 aa).

A mitochondrion-targeting transit peptide spans 1–55 (MASGIRCFRLLHPAFRSYHAALTRPVSEVSMKTVSGRQHGHRQYSAYPAVPVRHF).

The protein belongs to the RRF family.

It localises to the mitochondrion. In terms of biological role, responsible for the disassembly of ribosomes from messenger RNA at the termination of mitochondrial protein biosynthesis. Acts in collaboration with GFM2. Promotes mitochondrial ribosome recycling by dissolution of intersubunit contacts. This Mus musculus (Mouse) protein is Ribosome-recycling factor, mitochondrial (Mrrf).